The following is a 238-amino-acid chain: Large ribosomal subunit protein uL3 (238 aa).

2 disordered regions span residues 140–164 (SHRS…KMPG) and 212–238 (LPKE…QEGA). Glutamine 151 carries the N5-methylglutamine modification. Residues 225 to 238 (AGGEAEAAAQQEGA) show a composition bias toward low complexity.

This sequence belongs to the universal ribosomal protein uL3 family. As to quaternary structure, part of the 50S ribosomal subunit. Forms a cluster with proteins L14 and L19. In terms of processing, methylated by PrmB.

One of the primary rRNA binding proteins, it binds directly near the 3'-end of the 23S rRNA, where it nucleates assembly of the 50S subunit. The protein is Large ribosomal subunit protein uL3 of Bradyrhizobium diazoefficiens (strain JCM 10833 / BCRC 13528 / IAM 13628 / NBRC 14792 / USDA 110).